The chain runs to 411 residues: Glutamate dehydrogenase 1 (411 aa).

The active site involves lysine 102.

It belongs to the Glu/Leu/Phe/Val dehydrogenases family.

It catalyses the reaction L-glutamate + NAD(+) + H2O = 2-oxoglutarate + NH4(+) + NADH + H(+). The catalysed reaction is L-glutamate + NADP(+) + H2O = 2-oxoglutarate + NH4(+) + NADPH + H(+). In Arabidopsis thaliana (Mouse-ear cress), this protein is Glutamate dehydrogenase 1 (GDH1).